We begin with the raw amino-acid sequence, 274 residues long: Putative ABC transporter ATP-binding protein alr3946 (274 aa).

Residues 6-242 (LTFEQVYYTY…REILDSIELG (237 aa)) form the ABC transporter domain. Position 40–47 (40–47 (GRNGCGKT)) interacts with ATP.

It belongs to the ABC transporter superfamily.

The protein localises to the cell inner membrane. Probably part of an ABC transporter complex. Responsible for energy coupling to the transport system. The sequence is that of Putative ABC transporter ATP-binding protein alr3946 from Nostoc sp. (strain PCC 7120 / SAG 25.82 / UTEX 2576).